The primary structure comprises 270 residues: Aliphatic sulfonates import ATP-binding protein SsuB (270 aa).

The ABC transporter domain occupies 17–238; that stretch reads LAANDLRRTF…VRGSHRLAAL (222 aa). 49-56 serves as a coordination point for ATP; the sequence is GRSGCGKS. The disordered stretch occupies residues 250–270; the sequence is PGTPPEPEPVAPLPTHLRWAH. Residues 251-261 show a composition bias toward pro residues; it reads GTPPEPEPVAP.

Belongs to the ABC transporter superfamily. Aliphatic sulfonates importer (TC 3.A.1.17.2) family. As to quaternary structure, the complex is composed of two ATP-binding proteins (SsuB), two transmembrane proteins (SsuC) and a solute-binding protein (SsuA).

It is found in the cell inner membrane. The catalysed reaction is ATP + H2O + aliphatic sulfonate-[sulfonate-binding protein]Side 1 = ADP + phosphate + aliphatic sulfonateSide 2 + [sulfonate-binding protein]Side 1.. In terms of biological role, part of the ABC transporter complex SsuABC involved in aliphatic sulfonates import. Responsible for energy coupling to the transport system. This is Aliphatic sulfonates import ATP-binding protein SsuB from Pseudomonas entomophila (strain L48).